The following is a 908-amino-acid chain: MKNIYKDTLLIGQTDFDMRAGLKDKEPVIQEMWDAKKIYDQKQKLNEGKPLFMLHDGPPYANGDLHIGHALNKTLKDMIIRWKNANGYLAPFIMGWDTHGLPIETAVTKMGIDRKQTPAVEFRDMCKDYALKQVANQANQFKRLGIFSNSDVKYVTLTHDFEVSELRLFQKMYEKEMVYKALKPIYWSPSSESALAESEIEYKDVKSPTIFVAMKVVEGNAKIDTDTEIVIWTTTPWTIPSNQMAAVGENIEYNIVKANDRKFILASSLVNKVAEQIGWETFEILDTLKGPEIVGVKYAHPLYEQKINPVVIGHHVTDEAGTGIVHTAGGFGEDDYIIVKQHGIEPFAPIDDQGKFTNEIAEFDEKLVGVFYEDANKIVGMDLEAKQRLLKLKFVSHSYPHDWRTKKPVIYRCTSQWFIGLDKAKNQILANVDQITTKPEWAKKRLYQVLEDRTDWTISRQRLWGVPIVAFYDQNDKLVLNNEILAFAIDKIAELGTNAWFDKPADTFLPEAYRNKNLKKEKDILDVWFDSGSSAIALSERFKNLPLPYDLYLEGNDQYRGWFNASMINSTIYSGKSPYKKLISHGMTVDEKGNKMSKSLGNGIDPIEFANTQGADILRLWVASTDYTDDQKIGPEIIKQIGESYRKIRNTMRFILANLFDFDPSKDYQTNLTEVDRYALNNLSVVKNKASEAYDNLSYNQVYNLVVNYVTKDLSSFYLDFIKDILYIEKNDSIRRRQVQTVLYEQLWMLIDLLRPILIHTIEEVYQAMVNLNKTDSVHLLDNKKQDFIESNEFVTKWNNIMVLRDDVNKALEIAREQKIINKGFEATVKVCLKDEFKNIESTTELEKIFIVNSLSFTNDCSGLSEQKIAFVGVELKNGTKCERCWGIFDTLINNEICERCNSVVESL.

A 'HIGH' region motif is present at residues 59 to 69 (PYANGDLHIGH). E554 serves as a coordination point for L-isoleucyl-5'-AMP. A 'KMSKS' region motif is present at residues 595–599 (KMSKS). Residue K598 coordinates ATP. Zn(2+)-binding residues include C882, C885, C898, and C901.

Belongs to the class-I aminoacyl-tRNA synthetase family. IleS type 1 subfamily. As to quaternary structure, monomer. Zn(2+) is required as a cofactor.

It localises to the cytoplasm. It catalyses the reaction tRNA(Ile) + L-isoleucine + ATP = L-isoleucyl-tRNA(Ile) + AMP + diphosphate. In terms of biological role, catalyzes the attachment of isoleucine to tRNA(Ile). As IleRS can inadvertently accommodate and process structurally similar amino acids such as valine, to avoid such errors it has two additional distinct tRNA(Ile)-dependent editing activities. One activity is designated as 'pretransfer' editing and involves the hydrolysis of activated Val-AMP. The other activity is designated 'posttransfer' editing and involves deacylation of mischarged Val-tRNA(Ile). In Mesoplasma florum (strain ATCC 33453 / NBRC 100688 / NCTC 11704 / L1) (Acholeplasma florum), this protein is Isoleucine--tRNA ligase.